We begin with the raw amino-acid sequence, 346 residues long: MEKLARKSVQKLTPYLSARRIGGTGDVWLNANESPFDNEYRTNFARLNRYSDCQPKALIAAYAAYAGVKPEQTLTSRGADEGIELLIRAFCETNEDAILYCPPTYGMYSVSAETIGVERKTVPLTEDWQLDLSGIEANLDKVKLVFVCSPNNPTGNLVKREDIIALLEMTKDRAIVVMDEAYIDFCPEASTVDLLAQYSNLAILRTLSKAFALAGLRCGFTLANEELINVLLKVIAPYPVPVPVAEIATQALSEAGLARAKFQVLDLNANRAYLQVGLSMIAGLEVFEGWGNYLLVKFPNGDELFKAAWESGIILRNSPIKDCVRISVGSRDECEKTLGFIRNYYS.

Position 209 is an N6-(pyridoxal phosphate)lysine (lysine 209).

The protein belongs to the class-II pyridoxal-phosphate-dependent aminotransferase family. Histidinol-phosphate aminotransferase subfamily. Homodimer. Requires pyridoxal 5'-phosphate as cofactor.

The catalysed reaction is L-histidinol phosphate + 2-oxoglutarate = 3-(imidazol-4-yl)-2-oxopropyl phosphate + L-glutamate. The protein operates within amino-acid biosynthesis; L-histidine biosynthesis; L-histidine from 5-phospho-alpha-D-ribose 1-diphosphate: step 7/9. The chain is Histidinol-phosphate aminotransferase from Vibrio vulnificus (strain CMCP6).